A 675-amino-acid polypeptide reads, in one-letter code: Heat shock 70 kDa protein 12A (675 aa).

Over residues 1-13 the composition is skewed to basic and acidic residues; it reads MADKEAGGSDGPR. Residues 1-45 form a disordered region; it reads MADKEAGGSDGPRETAPTSAYSSPARSLGDTGITPLSPSHIVNDT. A2 carries the post-translational modification N-acetylalanine. 2 stretches are compositionally biased toward polar residues: residues 16–25 and 34–45; these read APTSAYSSPA and TPLSPSHIVNDT.

This sequence belongs to the heat shock protein 70 family. Interacts with SORL1 (via cytosolic C-terminus); this interaction affects SORL1 internalization and subcellular localization. As to expression, widely expressed with highest levels in brain, kidney and muscle.

It localises to the cytoplasm. The protein resides in the nucleus. Its function is as follows. Adapter protein for SORL1, but not SORT1. Delays SORL1 internalization and affects SORL1 subcellular localization. This chain is Heat shock 70 kDa protein 12A (HSPA12A), found in Homo sapiens (Human).